A 385-amino-acid chain; its full sequence is F-box only protein 4 (385 aa).

Residues Ser-11 and Ser-46 each carry the phosphoserine modification. The 47-residue stretch at 54-100 folds into the F-box domain; it reads TSALTRLPVDVQLYILSFLSPHDLCQLGSTDHYWNKTIRDPILWRYF.

As to quaternary structure, homodimer. Part of the SCF (SKP1-CUL1-F-box) E3 ubiquitin-protein ligase complex SCF(FBXO4) formed of CUL1, SKP1, RBX1 and FBXO4. Interacts with TERF1; this interaction is prevented in the presence of GNL3L. Identified in a complex with CRYAB and CCND1. In terms of processing, phosphorylation at Ser-11 varies during the cell cycle. It is low in resting cells and high in the S phase and the G2/M phase of the cell cycle. Phosphorylation is decreased during late G1 phase. Phosphorylation at Ser-11 is important for homodimerization and for optimal ubiquitin ligase activity towards CCND1.

It is found in the cytoplasm. It functions in the pathway protein modification; protein ubiquitination. Substrate recognition component of a SCF (SKP1-CUL1-F-box protein) E3 ubiquitin-protein ligase complex that mediates the ubiquitination and subsequent proteasomal degradation of target proteins. Promotes ubiquitination of cyclin-D1 (CCND1) and its subsequent proteasomal degradation. However, it does not act as a major regulator of CCND1 stability during the G1/S transition. Recognizes TERF1 and promotes its ubiquitination together with UBE2D1. Promotes ubiquitination of FXR1 following phosphorylation of FXR1 by GSK3B, leading to FXR1 degradation by the proteasome. The polypeptide is F-box only protein 4 (Mus musculus (Mouse)).